The following is a 1138-amino-acid chain: Pesticidal crystal protein Cry7Aa (1138 aa).

It belongs to the delta endotoxin family.

In terms of biological role, promotes colloidosmotic lysis by binding to the midgut epithelial cells of Coleoptera. This protein is not toxic in its natural form. It is highly toxic to Colorado potato beetle larvae after an in vitro solubilization and trypsin activation step. This is Pesticidal crystal protein Cry7Aa (cry7Aa) from Bacillus thuringiensis.